The primary structure comprises 597 residues: Golgin subfamily A member 8C (597 aa).

Disordered stretches follow at residues 1 to 80 (MAEE…VPDS) and 96 to 120 (KQQK…QKAE). The span at 38-50 (TNGSIHETATSGG) shows a compositional bias: polar residues. The segment covering 53-70 (SPGDSSSTSSSLHAPQSP) has biased composition (low complexity). Coiled coils occupy residues 81–141 (RSVK…NTDL), 199–255 (EWKL…SQEV), and 296–394 (SEVE…GKRL). The span at 100-120 (KQVEHQLEEEKKANNEKQKAE) shows a compositional bias: basic and acidic residues. Disordered stretches follow at residues 390–422 (LGKR…SGFM), 457–498 (PITK…GVAA), and 549–576 (PVQG…QEHP). Gly residues predominate over residues 470-483 (PGGGHHQAGPGQGG). A compositionally biased stretch (basic and acidic residues) spans 553-563 (ETREGSPHDKP).

Belongs to the GOLGA8 family.

The protein is Golgin subfamily A member 8C (GOLGA8CP) of Homo sapiens (Human).